Reading from the N-terminus, the 258-residue chain is Enterotoxin type G (258 aa).

The N-terminal stretch at 1 to 25 (MKKLSTVIIILILEIVFHNMNYVNA) is a signal peptide. A disulfide bridge links C116 with C133.

The protein belongs to the staphylococcal/streptococcal toxin family.

It localises to the secreted. In terms of biological role, staphylococcal enterotoxins cause the intoxication staphylococcal food poisoning syndrome. The illness is characterized by high fever, hypotension, diarrhea, shock, and in some cases death. This Staphylococcus aureus (strain N315) protein is Enterotoxin type G (entG).